The sequence spans 275 residues: T-cell ecto-ADP-ribosyltransferase 1 (275 aa).

The signal sequence occupies residues 1 to 20; sequence MPSNICKFFLTWWLIQQVTG. Intrachain disulfides connect C41-C243 and C141-C193. N58 carries an N-linked (GlcNAc...) asparagine glycan. The TR mART core domain maps to 61–238; the sequence is EKLKVAWEEA…IFLDSPKRKK (178 aa). Residues Y98, R146, and Q164 each coordinate NAD(+). Residue R146 is part of the active site. S167 is an active-site residue. S202 lines the NAD(+) pocket. Residue E209 is part of the active site. The GPI-anchor amidated serine moiety is linked to residue S246. Positions 247–275 are cleaved as a propeptide — removed in mature form; sequence SAGTRESCVSLFLVVLTSLLVQLLCLAEP.

Belongs to the Arg-specific ADP-ribosyltransferase family. As to expression, postthymic T-cells.

It is found in the cell membrane. The catalysed reaction is L-arginyl-[protein] + NAD(+) = N(omega)-(ADP-D-ribosyl)-L-arginyl-[protein] + nicotinamide + H(+). It catalyses the reaction NAD(+) + H2O = ADP-D-ribose + nicotinamide + H(+). Has NAD(+) glycohydrolase activity and extremely low ADP-ribosyltransferase activity. In Rattus norvegicus (Rat), this protein is T-cell ecto-ADP-ribosyltransferase 1 (Art2a).